The primary structure comprises 614 residues: Replication protein E1 (614 aa).

The tract at residues 1–25 is disordered; sequence MASRVSDTGNGNENKENEGTVASDH. A compositionally biased stretch (basic and acidic residues) spans 13–25; that stretch reads ENKENEGTVASDH. A Nuclear localization signal motif is present at residues 88 to 90; sequence KRK. A phosphoserine; by host mark is found at S94 and S104. A Nuclear export signal motif is present at residues 103-112; it reads LSPRLAGVSL. Over residues 136 to 146 the composition is skewed to polar residues; it reads VEVSQLSSTPS. The tract at residues 136–156 is disordered; it reads VEVSQLSSTPSAPGPDIRLPK. A DNA-binding region region spans residues 154–316; the sequence is LPKPSDIDLE…NQCVVSNQQT (163 aa). In terms of domain architecture, SF3 helicase spans 403–567; it reads NSWRGIVHFL…FPLKGNGQPL (165 aa). 443–450 provides a ligand contact to ATP; it reads GPSDTGKS.

Belongs to the papillomaviridae E1 protein family. In terms of assembly, can form hexamers. Interacts with E2 protein; this interaction increases E1 DNA binding specificity. Interacts with host DNA polymerase subunit POLA2. Interacts with host single stranded DNA-binding protein RPA1. Interacts with host TOP1; this interaction stimulates the enzymatic activity of TOP1. Phosphorylated.

Its subcellular location is the host nucleus. It catalyses the reaction Couples ATP hydrolysis with the unwinding of duplex DNA by translocating in the 3'-5' direction.. The enzyme catalyses ATP + H2O = ADP + phosphate + H(+). In terms of biological role, ATP-dependent DNA 3'-5' helicase required for initiation of viral DNA replication. It forms a complex with the viral E2 protein. The E1-E2 complex binds to the replication origin which contains binding sites for both proteins. During the initial step, a dimer of E1 interacts with a dimer of protein E2 leading to a complex that binds the viral origin of replication with high specificity. Then, a second dimer of E1 displaces the E2 dimer in an ATP-dependent manner to form the E1 tetramer. Following this, two E1 monomers are added to each half of the site, which results in the formation of two E1 trimers on the viral ori. Subsequently, two hexamers will be created. The double hexamer acts as a bi-directional helicase machinery and unwinds the viral DNA and then recruits the host DNA polymerase to start replication. In Homo sapiens (Human), this protein is Replication protein E1.